The primary structure comprises 147 residues: Small ribosomal subunit protein bS6 (147 aa).

Residues 114 to 147 (GKGTRAAEQAAAAEAAAPAAAPAEPASAEPAPAV) form a disordered region. Residues 119–147 (AAEQAAAAEAAAPAAAPAEPASAEPAPAV) show a composition bias toward low complexity.

This sequence belongs to the bacterial ribosomal protein bS6 family.

Binds together with bS18 to 16S ribosomal RNA. The sequence is that of Small ribosomal subunit protein bS6 from Koribacter versatilis (strain Ellin345).